A 106-amino-acid chain; its full sequence is UPF0145 protein GSU2791 (106 aa).

It belongs to the UPF0145 family.

In Geobacter sulfurreducens (strain ATCC 51573 / DSM 12127 / PCA), this protein is UPF0145 protein GSU2791.